Consider the following 447-residue polypeptide: NADH-ubiquinone oxidoreductase chain 4 (447 aa).

Transmembrane regions (helical) follow at residues 28-48 (IFLLTFMFMINLSSLNYFNYI), 56-76 (MVSYGLILLSFWICGLMLMAS), 89-109 (FVFMILFLLFMLVLTFSSMSV), 110-130 (FMFYLFFEASLIPTLFLILGW), 141-161 (VYLLFYTLLASLPLLIGIFYI), 183-203 (LLYLSLVFAFLVKMPMFLVHL), 213-233 (PVSGSMILAGILLKLGGYGLL), 246-266 (YNYWWISISLVGGVLISLVCL), 273-293 (ALIAYSSVAHMGIVLSGLLTM), 298-318 (LTGSYALMIAHGLCSSGLFCL), 331-351 (LLINKGLLNFMPTLSLWWFLL), 374-394 (IVSWSWITMIMLSFLSFFSAA), and 409-431 (YSGVYFFSVGTTREFLLLMLHWL).

Belongs to the complex I subunit 4 family.

The protein resides in the mitochondrion membrane. The enzyme catalyses a ubiquinone + NADH + 5 H(+)(in) = a ubiquinol + NAD(+) + 4 H(+)(out). Core subunit of the mitochondrial membrane respiratory chain NADH dehydrogenase (Complex I) that is believed to belong to the minimal assembly required for catalysis. Complex I functions in the transfer of electrons from NADH to the respiratory chain. The immediate electron acceptor for the enzyme is believed to be ubiquinone. The protein is NADH-ubiquinone oxidoreductase chain 4 (mt:ND4) of Anopheles gambiae (African malaria mosquito).